We begin with the raw amino-acid sequence, 1161 residues long: DNA-directed RNA polymerase subunit beta' (1161 aa).

Cys-60, Cys-62, Cys-75, and Cys-78 together coordinate Zn(2+). Asp-449, Asp-451, and Asp-453 together coordinate Mg(2+). Residues Cys-790, Cys-864, Cys-871, and Cys-874 each contribute to the Zn(2+) site.

Belongs to the RNA polymerase beta' chain family. The RNAP catalytic core consists of 2 alpha, 1 beta, 1 beta' and 1 omega subunit. When a sigma factor is associated with the core the holoenzyme is formed, which can initiate transcription. Requires Mg(2+) as cofactor. Zn(2+) serves as cofactor.

It carries out the reaction RNA(n) + a ribonucleoside 5'-triphosphate = RNA(n+1) + diphosphate. Its function is as follows. DNA-dependent RNA polymerase catalyzes the transcription of DNA into RNA using the four ribonucleoside triphosphates as substrates. This is DNA-directed RNA polymerase subunit beta' from Clostridioides difficile (strain 630) (Peptoclostridium difficile).